Consider the following 230-residue polypeptide: Large ribosomal subunit protein uL1 (230 aa).

The protein belongs to the universal ribosomal protein uL1 family. As to quaternary structure, part of the 50S ribosomal subunit.

Its function is as follows. Binds directly to 23S rRNA. The L1 stalk is quite mobile in the ribosome, and is involved in E site tRNA release. Protein L1 is also a translational repressor protein, it controls the translation of the L11 operon by binding to its mRNA. In Leuconostoc mesenteroides subsp. mesenteroides (strain ATCC 8293 / DSM 20343 / BCRC 11652 / CCM 1803 / JCM 6124 / NCDO 523 / NBRC 100496 / NCIMB 8023 / NCTC 12954 / NRRL B-1118 / 37Y), this protein is Large ribosomal subunit protein uL1.